The primary structure comprises 813 residues: Tax1-binding protein 1 homolog (813 aa).

Phosphoserine occurs at positions 124, 138, and 225. The stretch at 144 to 627 forms a coiled coil; sequence TTKAGLLELK…LENQAERKME (484 aa). Residues 320–420 form an oligomerization region; the sequence is EEIGRLQLCL…ELKLNAMKKD (101 aa). A compositionally biased stretch (polar residues) spans 489–502; that stretch reads DASVNTDPATSAST. The tract at residues 489–508 is disordered; that stretch reads DASVNTDPATSASTVDVKPS. Serine 617, serine 633, and serine 690 each carry phosphoserine. The disordered stretch occupies residues 663–738; that stretch reads YASQETRDGA…DPPSQHLRGH (76 aa). UBZ1-type zinc fingers lie at residues 751 to 777 and 778 to 804; these read HKKCPLCELMFPPNYDQSKFEEHVESH and WKVCPMCSEQFPPDYDQQVFERHVQTH. 8 residues coordinate Zn(2+): cysteine 754, cysteine 757, histidine 773, histidine 777, cysteine 781, cysteine 784, histidine 800, and histidine 804.

Homooligomer. Interacts with TNFAIP3. Interacts with STARD13. Interacts with MYO6. Interacts with TOM1; the interaction is indirect and is mediated by MYO6, which acts as a bridge between TOM1 and TAX1BP1. Interacts with MAVS; this interaction induces MAVS polyubiquitination. Interacts with TNIP1. Interacts with TRAF6; this interaction mediates deubiquitination of TRAF6 and inhibition of NF-kappa-B activation. Interacts with RIPK1; this interaction negatively regulates RIPK1 ubiquitination. Interacts with NBR1. Interacts with TBK1. Interacts with RB1CC1. Interacts with SQSTM1. Interacts with AZI2.

It localises to the cytoplasm. It is found in the mitochondrion. The protein resides in the preautophagosomal structure. Its subcellular location is the cytoplasmic vesicle. The protein localises to the autophagosome. In terms of biological role, ubiquitin-binding adapter that participates in inflammatory, antiviral and innate immune processes as well as selective autophagy regulation. Plays a key role in the negative regulation of NF-kappa-B and IRF3 signalings by acting as an adapter for the ubiquitin-editing enzyme A20/TNFAIP3 to bind and inactivate its substrates. Disrupts the interactions between the E3 ubiquitin ligase TRAF3 and TBK1/IKBKE to attenuate 'Lys63'-linked polyubiquitination of TBK1 and thereby IFN-beta production. Also recruits A20/TNFAIP3 to ubiquitinated signaling proteins TRAF6 and RIPK1, leading to their deubiquitination and disruption of IL-1 and TNF-induced NF-kappa-B signaling pathways. Inhibits virus-induced apoptosis by inducing the 'Lys-48'-linked polyubiquitination and degradation of MAVS via recruitment of the E3 ligase ITCH, thereby attenuating MAVS-mediated apoptosis signaling. As a macroautophagy/autophagy receptor, facilitates the xenophagic clearance of pathogenic bacteria such as Salmonella typhimurium and Mycobacterium tuberculosis. Upon NBR1 recruitment to the SQSTM1-ubiquitin condensates, acts as the major recruiter of RB1CC1 to these ubiquitin condensates to promote their autophagic degradation. This Pongo abelii (Sumatran orangutan) protein is Tax1-binding protein 1 homolog (TAX1BP1).